The sequence spans 349 residues: N-acetyl-gamma-glutamyl-phosphate reductase (349 aa).

Residue C149 is part of the active site.

It belongs to the NAGSA dehydrogenase family. Type 1 subfamily.

Its subcellular location is the cytoplasm. The enzyme catalyses N-acetyl-L-glutamate 5-semialdehyde + phosphate + NADP(+) = N-acetyl-L-glutamyl 5-phosphate + NADPH + H(+). It participates in amino-acid biosynthesis; L-arginine biosynthesis; N(2)-acetyl-L-ornithine from L-glutamate: step 3/4. Catalyzes the NADPH-dependent reduction of N-acetyl-5-glutamyl phosphate to yield N-acetyl-L-glutamate 5-semialdehyde. The polypeptide is N-acetyl-gamma-glutamyl-phosphate reductase (Acinetobacter baumannii (strain AB307-0294)).